We begin with the raw amino-acid sequence, 201 residues long: Protocatechuate 3,4-dioxygenase alpha chain (201 aa).

Arg-134 contributes to the 3,4-dihydroxybenzoate binding site.

The protein belongs to the intradiol ring-cleavage dioxygenase family. As to quaternary structure, the enzyme is an oligomer of 12 copies of the alpha and beta chains. Requires Fe(3+) as cofactor.

It catalyses the reaction 3,4-dihydroxybenzoate + O2 = 3-carboxy-cis,cis-muconate + 2 H(+). Its pathway is aromatic compound metabolism; beta-ketoadipate pathway; 3-carboxy-cis,cis-muconate from 3,4-dihydroxybenzoate: step 1/1. In terms of biological role, plays an essential role in the utilization of numerous aromatic and hydroaromatic compounds via the beta-ketoadipate pathway. In Pseudomonas putida (Arthrobacter siderocapsulatus), this protein is Protocatechuate 3,4-dioxygenase alpha chain (pcaG).